Reading from the N-terminus, the 284-residue chain is Bifunctional protein FolD (284 aa).

NADP(+) contacts are provided by residues 166–168 (GRS) and Ser191.

Belongs to the tetrahydrofolate dehydrogenase/cyclohydrolase family. As to quaternary structure, homodimer.

It catalyses the reaction (6R)-5,10-methylene-5,6,7,8-tetrahydrofolate + NADP(+) = (6R)-5,10-methenyltetrahydrofolate + NADPH. It carries out the reaction (6R)-5,10-methenyltetrahydrofolate + H2O = (6R)-10-formyltetrahydrofolate + H(+). It participates in one-carbon metabolism; tetrahydrofolate interconversion. Functionally, catalyzes the oxidation of 5,10-methylenetetrahydrofolate to 5,10-methenyltetrahydrofolate and then the hydrolysis of 5,10-methenyltetrahydrofolate to 10-formyltetrahydrofolate. This is Bifunctional protein FolD from Delftia acidovorans (strain DSM 14801 / SPH-1).